Reading from the N-terminus, the 249-residue chain is Putative SAP domain-containing protein 049L (249 aa).

Basic and acidic residues-rich tracts occupy residues 1 to 12 (MAAPKAEGEDKP), 22 to 38 (PKPE…KEFC), and 95 to 107 (KKAE…KLDE). A disordered region spans residues 1 to 110 (MAAPKAEGED…DDKKLDEATG (110 aa)). The region spanning 119-153 (LSKLTIQTLKGMCKTRNLKISGNKAALVQRLIEAD) is the SAP domain.

This Frog virus 3 (isolate Goorha) (FV-3) protein is Putative SAP domain-containing protein 049L.